Here is a 286-residue protein sequence, read N- to C-terminus: Aldo-keto reductase MAP_4149 (286 aa).

Catalysis depends on Tyr-61, which acts as the Proton donor. 7 residues coordinate NADPH: Leu-201, Val-203, Val-239, Arg-241, Ser-242, Arg-247, and Asn-251.

The protein belongs to the aldo/keto reductase family.

The protein is Aldo-keto reductase MAP_4149 of Mycolicibacterium paratuberculosis (strain ATCC BAA-968 / K-10) (Mycobacterium paratuberculosis).